A 328-amino-acid chain; its full sequence is tRNA dimethylallyltransferase (328 aa).

10-17 (GPTASGKT) lines the ATP pocket. Position 12–17 (12–17 (TASGKT)) interacts with substrate.

Belongs to the IPP transferase family. As to quaternary structure, monomer. Mg(2+) is required as a cofactor.

It carries out the reaction adenosine(37) in tRNA + dimethylallyl diphosphate = N(6)-dimethylallyladenosine(37) in tRNA + diphosphate. Its function is as follows. Catalyzes the transfer of a dimethylallyl group onto the adenine at position 37 in tRNAs that read codons beginning with uridine, leading to the formation of N6-(dimethylallyl)adenosine (i(6)A). The protein is tRNA dimethylallyltransferase of Bifidobacterium longum subsp. infantis (strain ATCC 15697 / DSM 20088 / JCM 1222 / NCTC 11817 / S12).